A 153-amino-acid polypeptide reads, in one-letter code: SsrA-binding protein (153 aa).

This sequence belongs to the SmpB family.

Its subcellular location is the cytoplasm. Functionally, required for rescue of stalled ribosomes mediated by trans-translation. Binds to transfer-messenger RNA (tmRNA), required for stable association of tmRNA with ribosomes. tmRNA and SmpB together mimic tRNA shape, replacing the anticodon stem-loop with SmpB. tmRNA is encoded by the ssrA gene; the 2 termini fold to resemble tRNA(Ala) and it encodes a 'tag peptide', a short internal open reading frame. During trans-translation Ala-aminoacylated tmRNA acts like a tRNA, entering the A-site of stalled ribosomes, displacing the stalled mRNA. The ribosome then switches to translate the ORF on the tmRNA; the nascent peptide is terminated with the 'tag peptide' encoded by the tmRNA and targeted for degradation. The ribosome is freed to recommence translation, which seems to be the essential function of trans-translation. In Lactobacillus delbrueckii subsp. bulgaricus (strain ATCC 11842 / DSM 20081 / BCRC 10696 / JCM 1002 / NBRC 13953 / NCIMB 11778 / NCTC 12712 / WDCM 00102 / Lb 14), this protein is SsrA-binding protein.